A 447-amino-acid chain; its full sequence is uncharacterized protein (447 aa).

Disordered stretches follow at residues 1-80 (MTFE…EQSS), 115-184 (ATTQ…PNNP), and 295-322 (LQDN…SSGI). Over residues 11-32 (QRRDESAYRLGEEDGRQKGESS) the composition is skewed to basic and acidic residues. Positions 42 to 51 (KNPSNVSFWS) are enriched in polar residues. Positions 61–72 (VKTDRPQFHRAD) are enriched in basic and acidic residues. The segment covering 115–158 (ATTQSSPISTSFNPQLPSNSNTNRFDFGSESQLSSNYTNDTGLS) has biased composition (polar residues). The segment covering 300 to 321 (SLTSQGSNLSSQNSGLSSSSSG) has biased composition (low complexity). A run of 2 helical transmembrane segments spans residues 385-405 (FMFL…ASFL) and 424-444 (IINR…IGLG).

Its subcellular location is the membrane. This is an uncharacterized protein from Schizosaccharomyces pombe (strain 972 / ATCC 24843) (Fission yeast).